The chain runs to 535 residues: EH domain-containing protein 3 (535 aa).

Methionine 1 bears the N-acetylmethionine mark. A Dynamin-type G domain is found at 55-286; that stretch reads FDNKPMVLLV…DLFRDIQSLP (232 aa). The interval 65-72 is G1 motif; it reads GQYSTGKT. 65–72 contacts ATP; it reads GQYSTGKT. Residues 91 to 92 are G2 motif; it reads EP. The interval 153–156 is G3 motif; that stretch reads DTPG. Residues 198–227 are a coiled coil; that stretch reads DEFSEVIKALKNHEDKMRVVLNKADQIETQ. The tract at residues 219–222 is G4 motif; that stretch reads NKAD. Lysine 220 is a binding site for ATP. Isoleucine 243 is a region of interest (G5 motif). Tryptophan 258 contacts ATP. Lysine 315 participates in a covalent cross-link: Glycyl lysine isopeptide (Lys-Gly) (interchain with G-Cter in SUMO). Serine 349 and serine 456 each carry phosphoserine. The EH domain maps to 444–532; that stretch reads DKPMYDEIFY…AHLLPPSKRK (89 aa). The 36-residue stretch at 476–511 folds into the EF-hand domain; the sequence is LPNSVLGKIWKLADIDKDGMLDDDEFALANHLIKVK. Ca(2+)-binding residues include aspartate 489, aspartate 491, aspartate 493, methionine 495, and glutamate 500. Lysine 511 participates in a covalent cross-link: Glycyl lysine isopeptide (Lys-Gly) (interchain with G-Cter in SUMO).

This sequence belongs to the TRAFAC class dynamin-like GTPase superfamily. Dynamin/Fzo/YdjA family. EHD subfamily. Homooligomer, and heterooligomer with EHD1, EHD2 and EHD4, ATP-binding is required for heterooligomerization. Interacts with PACSIN1. Interacts with PACSIN2. Interacts (via EH domain) with MICALL1. Interacts (via EH domain) with RAB11FIP2. Interacts with ANK2. As to expression, highly expressed in heart and brain and moderately expressed in kidney, liver, and placenta.

The protein localises to the recycling endosome membrane. Its subcellular location is the cell membrane. The protein resides in the cell projection. It localises to the cilium membrane. Its function is as follows. ATP- and membrane-binding protein that controls membrane reorganization/tubulation upon ATP hydrolysis. In vitro causes tubulation of endocytic membranes. Binding to phosphatidic acid induces its membrane tubulation activity. Plays a role in endocytic transport. Involved in early endosome to recycling endosome compartment (ERC), retrograde early endosome to Golgi, and endosome to plasma membrane (rapid recycling) protein transport. Involved in the regulation of Golgi maintenance and morphology. Involved in the recycling of internalized D1 dopamine receptor. Plays a role in cardiac protein trafficking probably implicating ANK2. Involved in the ventricular membrane targeting of SLC8A1 and CACNA1C and probably the atrial membrane localization of CACNA1GG and CACNA1H implicated in the regulation of atrial myocyte excitability and cardiac conduction. In conjunction with EHD4 may be involved in endocytic trafficking of KDR/VEGFR2 implicated in control of glomerular function. Involved in the rapid recycling of integrin beta-3 implicated in cell adhesion maintenance. Involved in the unidirectional retrograde dendritic transport of endocytosed BACE1 and in efficient sorting of BACE1 to axons implicating a function in neuronal APP processing. Plays a role in the formation of the ciliary vesicle, an early step in cilium biogenesis; possibly sharing redundant functions with EHD1. The protein is EH domain-containing protein 3 of Homo sapiens (Human).